Here is a 238-residue protein sequence, read N- to C-terminus: Ribonuclease PH (238 aa).

Phosphate is bound by residues Arg-86 and 124 to 126; that span reads GTR.

It belongs to the RNase PH family. As to quaternary structure, homohexameric ring arranged as a trimer of dimers.

The catalysed reaction is tRNA(n+1) + phosphate = tRNA(n) + a ribonucleoside 5'-diphosphate. In terms of biological role, phosphorolytic 3'-5' exoribonuclease that plays an important role in tRNA 3'-end maturation. Removes nucleotide residues following the 3'-CCA terminus of tRNAs; can also add nucleotides to the ends of RNA molecules by using nucleoside diphosphates as substrates, but this may not be physiologically important. Probably plays a role in initiation of 16S rRNA degradation (leading to ribosome degradation) during starvation. The chain is Ribonuclease PH from Marinobacter nauticus (strain ATCC 700491 / DSM 11845 / VT8) (Marinobacter aquaeolei).